Reading from the N-terminus, the 468-residue chain is Sorting and assembly machinery component 50 homolog A (468 aa).

Residues 1-24 form a disordered region; the sequence is MGTVHARSLDPLPMNGPDFGSPDD. In terms of domain architecture, POTRA spans 44–124; it reads VVVQRVHFEG…LDVTFEVTEL (81 aa).

This sequence belongs to the SAM50/omp85 family. In terms of assembly, associates with the mitochondrial contact site and cristae organizing system (MICOS) complex (also known as MINOS or MitOS complex).

The protein localises to the mitochondrion outer membrane. May play a role in the maintenance of the structure of mitochondrial cristae. The protein is Sorting and assembly machinery component 50 homolog A (samm50-a) of Xenopus laevis (African clawed frog).